Consider the following 100-residue polypeptide: Urease subunit gamma (100 aa).

Belongs to the urease gamma subunit family. As to quaternary structure, heterotrimer of UreA (gamma), UreB (beta) and UreC (alpha) subunits. Three heterotrimers associate to form the active enzyme.

It is found in the cytoplasm. The catalysed reaction is urea + 2 H2O + H(+) = hydrogencarbonate + 2 NH4(+). It functions in the pathway nitrogen metabolism; urea degradation; CO(2) and NH(3) from urea (urease route): step 1/1. In Nostoc sp. (strain PCC 7120 / SAG 25.82 / UTEX 2576), this protein is Urease subunit gamma.